Here is a 479-residue protein sequence, read N- to C-terminus: M-phase inducer phosphatase (479 aa).

Positions 182 to 218 (MTESNTNSTTTPPPKTPETARDCFKRPEPPASANCSP) are disordered. The segment covering 199–209 (ETARDCFKRPE) has biased composition (basic and acidic residues). The Rhodanese domain maps to 316 to 432 (KVASYRIIDC…FFESHVELCE (117 aa)). The active site involves cysteine 379. The residue at position 455 (serine 455) is a Phosphoserine.

The protein belongs to the MPI phosphatase family.

It catalyses the reaction O-phospho-L-tyrosyl-[protein] + H2O = L-tyrosyl-[protein] + phosphate. Its function is as follows. This protein functions as a dosage-dependent inducer in mitotic control. It is a tyrosine protein phosphatase required for progression of the cell cycle. It may directly dephosphorylate Cdk1 and activate the Cdk1 activity. This chain is M-phase inducer phosphatase (stg), found in Drosophila melanogaster (Fruit fly).